The sequence spans 514 residues: Nitric oxide reductase transcription regulator NorR1 (514 aa).

A 4-aspartylphosphate modification is found at Asp-54. The Sigma-54 factor interaction domain occupies 187 to 416 (IIGQSQAIAG…LEHVISRAAL (230 aa)). Residues 215-222 (GETGVGKE) and 287-296 (EVGELPLSIQ) each bind ATP. A DNA-binding region (H-T-H motif) is located at residues 490–509 (WAKAARQLGMDASNLHKLAK).

It functions in the pathway nitrogen metabolism; nitrate reduction (denitrification) [regulation]. Required for the nitric oxide (NO) induced expression of NO reductase. Not required for expression of 2 other pathway members, nitrate reductase (nirS) and nitrous oxide reductase (nosZ). The chain is Nitric oxide reductase transcription regulator NorR1 (norR1) from Cupriavidus necator (strain ATCC 17699 / DSM 428 / KCTC 22496 / NCIMB 10442 / H16 / Stanier 337) (Ralstonia eutropha).